Here is a 125-residue protein sequence, read N- to C-terminus: Large ribosomal subunit protein bL12 (125 aa).

A disordered region spans residues 96-125 (PAPVKEGATKDEAEEIKKKIEEAGGTAELK). The segment covering 102–117 (GATKDEAEEIKKKIEE) has biased composition (basic and acidic residues).

The protein belongs to the bacterial ribosomal protein bL12 family. In terms of assembly, homodimer. Part of the ribosomal stalk of the 50S ribosomal subunit. Forms a multimeric L10(L12)X complex, where L10 forms an elongated spine to which 2 to 4 L12 dimers bind in a sequential fashion. Binds GTP-bound translation factors.

Functionally, forms part of the ribosomal stalk which helps the ribosome interact with GTP-bound translation factors. Is thus essential for accurate translation. In Alcanivorax borkumensis (strain ATCC 700651 / DSM 11573 / NCIMB 13689 / SK2), this protein is Large ribosomal subunit protein bL12.